We begin with the raw amino-acid sequence, 107 residues long: Ig kappa chain V-VI region SAPC 10 (107 aa).

The interval 1 to 23 (EIVLTQSPAITAASLGQKVTITC) is framework-1. Cysteine 23 and cysteine 87 are oxidised to a cystine. The complementarity-determining-1 stretch occupies residues 24–33 (SASSSVSYMH). The framework-2 stretch occupies residues 34–48 (WYQQKSGTSPKPWIY). The segment at 49–55 (EISKLAS) is complementarity-determining-2. Residues 56-87 (GVPARFSGSGSGTSYSLTISSMEAEDAAIYYC) form a framework-3 region. Residues 88-96 (QQWNYPLIT) form a complementarity-determining-3 region. The tract at residues 97–106 (FGGGTKLEIK) is framework-4.

In Mus musculus (Mouse), this protein is Ig kappa chain V-VI region SAPC 10.